A 237-amino-acid chain; its full sequence is Uridylate kinase (237 aa).

ATP is bound at residue 12 to 15 (KLSG). The interval 20 to 25 (GDEGFG) is involved in allosteric activation by GTP. Residue glycine 54 participates in UMP binding. ATP is bound by residues glycine 55 and arginine 59. UMP is bound by residues aspartate 74 and 135 to 142 (TGSPFFTT). 3 residues coordinate ATP: threonine 162, tyrosine 168, and aspartate 171.

It belongs to the UMP kinase family. As to quaternary structure, homohexamer.

The protein resides in the cytoplasm. The catalysed reaction is UMP + ATP = UDP + ADP. It participates in pyrimidine metabolism; CTP biosynthesis via de novo pathway; UDP from UMP (UMPK route): step 1/1. Its activity is regulated as follows. Allosterically activated by GTP. Inhibited by UTP. In terms of biological role, catalyzes the reversible phosphorylation of UMP to UDP. The chain is Uridylate kinase from Haemophilus ducreyi (strain 35000HP / ATCC 700724).